Here is a 63-residue protein sequence, read N- to C-terminus: Hyphancin-3F (63 aa).

An N-terminal signal peptide occupies residues 1–22; sequence MNFSRILFFVFACFVALASVSA. A propeptide spans 23-26 (removed by a dipeptidylpeptidase); that stretch reads APEP. The residue at position 61 (L61) is a Leucine amide.

This sequence belongs to the cecropin family.

The protein resides in the secreted. In terms of biological role, has antibacterial activity. This chain is Hyphancin-3F, found in Hyphantria cunea (Fall webworm moth).